The primary structure comprises 1196 residues: Ice nucleation protein (1196 aa).

The interval 172–1147 (ATYGSTLSGD…LSAGEDSTLI (976 aa)) is octapeptide periodicity. 3 disordered regions span residues 269 to 304 (GYGS…GYGS), 319 to 352 (GSTQ…GYGS), and 415 to 442 (GSTQ…GSNL). Composition is skewed to polar residues over residues 271-298 (GSTQ…GSNL) and 319-346 (GSTQ…GSNL).

It belongs to the bacterial ice nucleation protein family. Membrane environment or aggregation seems to be required for ice nucleation activity.

The protein localises to the cell outer membrane. Functionally, ice nucleation proteins enable bacteria to nucleate crystallization in supercooled water. This Pseudomonas syringae protein is Ice nucleation protein (inaV).